Here is a 401-residue protein sequence, read N- to C-terminus: Argininosuccinate synthase (401 aa).

ATP is bound by residues 10 to 18 (AYSGGVDTS) and A38. L-citrulline is bound at residue Y89. Residue G119 coordinates ATP. Residues T121, N125, and D126 each coordinate L-aspartate. Residue N125 coordinates L-citrulline. L-citrulline-binding residues include R129, S177, S186, E262, and Y274.

This sequence belongs to the argininosuccinate synthase family. Type 1 subfamily. Homotetramer.

Its subcellular location is the cytoplasm. The enzyme catalyses L-citrulline + L-aspartate + ATP = 2-(N(omega)-L-arginino)succinate + AMP + diphosphate + H(+). It functions in the pathway amino-acid biosynthesis; L-arginine biosynthesis; L-arginine from L-ornithine and carbamoyl phosphate: step 2/3. This is Argininosuccinate synthase from Synechococcus sp. (strain CC9311).